A 486-amino-acid chain; its full sequence is 3-dehydroshikimate dehydratase (486 aa).

It catalyses the reaction 3-dehydroshikimate = 3,4-dihydroxybenzoate + H2O. It participates in aromatic compound metabolism; 3,4-dihydroxybenzoate biosynthesis; 3,4-dihydroxybenzoate from 3-dehydroquinate: step 2/2. Functionally, converts dehydroshikimate to protocatechuate. The protein is 3-dehydroshikimate dehydratase (quiC) of Acinetobacter baylyi (strain ATCC 33305 / BD413 / ADP1).